A 174-amino-acid chain; its full sequence is Co-chaperone protein HscB (174 aa).

In terms of domain architecture, J spans 2–74; the sequence is DYFTLFGLPA…LKRAEYMLSL (73 aa).

This sequence belongs to the HscB family. As to quaternary structure, interacts with HscA and stimulates its ATPase activity. Interacts with IscU.

Co-chaperone involved in the maturation of iron-sulfur cluster-containing proteins. Seems to help targeting proteins to be folded toward HscA. The chain is Co-chaperone protein HscB from Yersinia pestis bv. Antiqua (strain Antiqua).